The following is a 351-amino-acid chain: MRVDAFDFDLPSERIALRPARPRDAARMLVVDAGNIVDAGVRDLPQWLRPGDCLVFNDTRVIPAQLEGLRGEAKIGATLHKRIDLRRWQAFVRNAKRLRVGETVDFGSGVAALAEERLADGSFVLAFAGDEPVELLLERAGTMPLPPYIAGKRGADEADRDDYQTMFAREDGAVAAPTAALHFTPELLAALAAAGIATETLTLHVGAGTFLPVKADDTDDHVMHAEWGRIEADTAARLNAVRASGGRVIAVGTTSLRLLESAARDDGTITPFAGDTSIFITPGYRFKAIDGLMTNFHLPRSTLFMLVSALMGLETMQAAYAHAIAREYRFYSYGDASLLLPRQSGRSRTLS.

Belongs to the QueA family. Monomer.

The protein localises to the cytoplasm. The catalysed reaction is 7-aminomethyl-7-carbaguanosine(34) in tRNA + S-adenosyl-L-methionine = epoxyqueuosine(34) in tRNA + adenine + L-methionine + 2 H(+). Its pathway is tRNA modification; tRNA-queuosine biosynthesis. Its function is as follows. Transfers and isomerizes the ribose moiety from AdoMet to the 7-aminomethyl group of 7-deazaguanine (preQ1-tRNA) to give epoxyqueuosine (oQ-tRNA). The polypeptide is S-adenosylmethionine:tRNA ribosyltransferase-isomerase (Sphingopyxis alaskensis (strain DSM 13593 / LMG 18877 / RB2256) (Sphingomonas alaskensis)).